The sequence spans 1401 residues: DNA-directed RNA polymerase subunit beta' (1401 aa).

C70, C72, C85, and C88 together coordinate Zn(2+). D460, D462, and D464 together coordinate Mg(2+). Residues C814, C888, C895, and C898 each contribute to the Zn(2+) site. The tract at residues 1369–1388 (RQKQKAVEQEGPSAEQATDN) is disordered.

The protein belongs to the RNA polymerase beta' chain family. The RNAP catalytic core consists of 2 alpha, 1 beta, 1 beta' and 1 omega subunit. When a sigma factor is associated with the core the holoenzyme is formed, which can initiate transcription. The cofactor is Mg(2+). Zn(2+) is required as a cofactor.

The catalysed reaction is RNA(n) + a ribonucleoside 5'-triphosphate = RNA(n+1) + diphosphate. Functionally, DNA-dependent RNA polymerase catalyzes the transcription of DNA into RNA using the four ribonucleoside triphosphates as substrates. The chain is DNA-directed RNA polymerase subunit beta' from Aliivibrio fischeri (strain ATCC 700601 / ES114) (Vibrio fischeri).